We begin with the raw amino-acid sequence, 216 residues long: Imidazole glycerol phosphate synthase subunit HisH (216 aa).

Positions 2-216 (RVAIIDYGSG…FIANFLKWKP (215 aa)) constitute a Glutamine amidotransferase type-1 domain. Cysteine 88 acts as the Nucleophile in catalysis. Active-site residues include histidine 196 and glutamate 198.

Heterodimer of HisH and HisF.

Its subcellular location is the cytoplasm. It carries out the reaction 5-[(5-phospho-1-deoxy-D-ribulos-1-ylimino)methylamino]-1-(5-phospho-beta-D-ribosyl)imidazole-4-carboxamide + L-glutamine = D-erythro-1-(imidazol-4-yl)glycerol 3-phosphate + 5-amino-1-(5-phospho-beta-D-ribosyl)imidazole-4-carboxamide + L-glutamate + H(+). It catalyses the reaction L-glutamine + H2O = L-glutamate + NH4(+). The protein operates within amino-acid biosynthesis; L-histidine biosynthesis; L-histidine from 5-phospho-alpha-D-ribose 1-diphosphate: step 5/9. In terms of biological role, IGPS catalyzes the conversion of PRFAR and glutamine to IGP, AICAR and glutamate. The HisH subunit catalyzes the hydrolysis of glutamine to glutamate and ammonia as part of the synthesis of IGP and AICAR. The resulting ammonia molecule is channeled to the active site of HisF. This Brucella melitensis biotype 1 (strain ATCC 23456 / CCUG 17765 / NCTC 10094 / 16M) protein is Imidazole glycerol phosphate synthase subunit HisH.